Here is a 506-residue protein sequence, read N- to C-terminus: GMP synthase [glutamine-hydrolyzing] (506 aa).

Residues 2–190 (SIVILDFGSQ…FLDICGVTRD (189 aa)) enclose the Glutamine amidotransferase type-1 domain. Catalysis depends on Cys79, which acts as the Nucleophile. Active-site residues include His165 and Glu167. A GMPS ATP-PPase domain is found at 191-381 (WNAEHIVDEL…LGLPDHIRMR (191 aa)). Residue 219-225 (SGGVDSS) coordinates ATP.

As to quaternary structure, homodimer.

The catalysed reaction is XMP + L-glutamine + ATP + H2O = GMP + L-glutamate + AMP + diphosphate + 2 H(+). Its pathway is purine metabolism; GMP biosynthesis; GMP from XMP (L-Gln route): step 1/1. Functionally, catalyzes the synthesis of GMP from XMP. This is GMP synthase [glutamine-hydrolyzing] (guaA) from Deinococcus radiodurans (strain ATCC 13939 / DSM 20539 / JCM 16871 / CCUG 27074 / LMG 4051 / NBRC 15346 / NCIMB 9279 / VKM B-1422 / R1).